Reading from the N-terminus, the 647-residue chain is Threonine--tRNA ligase (647 aa).

A TGS domain is found at 1-61 (MIKITFPDGA…EEDGSIEIVT (61 aa)). The catalytic stretch occupies residues 240–538 (DHRKLGKELD…LIETYKGAFP (299 aa)). Residues cysteine 334, histidine 385, and histidine 515 each coordinate Zn(2+).

The protein belongs to the class-II aminoacyl-tRNA synthetase family. In terms of assembly, homodimer. It depends on Zn(2+) as a cofactor.

The protein localises to the cytoplasm. It carries out the reaction tRNA(Thr) + L-threonine + ATP = L-threonyl-tRNA(Thr) + AMP + diphosphate + H(+). Functionally, catalyzes the attachment of threonine to tRNA(Thr) in a two-step reaction: L-threonine is first activated by ATP to form Thr-AMP and then transferred to the acceptor end of tRNA(Thr). Also edits incorrectly charged L-seryl-tRNA(Thr). The chain is Threonine--tRNA ligase from Streptococcus agalactiae serotype III (strain NEM316).